A 145-amino-acid chain; its full sequence is Small ribosomal subunit protein uS17c (145 aa).

The N-terminal 36 residues, 1-36, are a transit peptide targeting the chloroplast; that stretch reads MLLTTPFVSSPVRVQGNGGSGASPWAGAATALRIQA. The tract at residues 101-145 is disordered; sequence KTKHFLAVPLPPRDTRRKSQLLPPLQSQSQSQDQDQPPTPPPSSD. Over residues 120 to 136 the composition is skewed to low complexity; sequence QLLPPLQSQSQSQDQDQ.

It belongs to the universal ribosomal protein uS17 family. Part of the 30S ribosomal subunit.

It is found in the plastid. The protein localises to the chloroplast. Its function is as follows. One of the primary rRNA binding proteins, it binds specifically to the 5'-end of 16S ribosomal RNA. The sequence is that of Small ribosomal subunit protein uS17c (RPS17) from Oryza sativa subsp. japonica (Rice).